Here is a 212-residue protein sequence, read N- to C-terminus: Imidazole glycerol phosphate synthase subunit HisH (212 aa).

The 207-residue stretch at 4-210 folds into the Glutamine amidotransferase type-1 domain; it reads NIGIIDYGMG…LKWLHEKNSD (207 aa). Catalysis depends on cysteine 82, which acts as the Nucleophile. Residues histidine 185 and glutamate 187 contribute to the active site.

In terms of assembly, heterodimer of HisH and HisF.

It is found in the cytoplasm. The catalysed reaction is 5-[(5-phospho-1-deoxy-D-ribulos-1-ylimino)methylamino]-1-(5-phospho-beta-D-ribosyl)imidazole-4-carboxamide + L-glutamine = D-erythro-1-(imidazol-4-yl)glycerol 3-phosphate + 5-amino-1-(5-phospho-beta-D-ribosyl)imidazole-4-carboxamide + L-glutamate + H(+). The enzyme catalyses L-glutamine + H2O = L-glutamate + NH4(+). The protein operates within amino-acid biosynthesis; L-histidine biosynthesis; L-histidine from 5-phospho-alpha-D-ribose 1-diphosphate: step 5/9. Its function is as follows. IGPS catalyzes the conversion of PRFAR and glutamine to IGP, AICAR and glutamate. The HisH subunit catalyzes the hydrolysis of glutamine to glutamate and ammonia as part of the synthesis of IGP and AICAR. The resulting ammonia molecule is channeled to the active site of HisF. This Prochlorococcus marinus (strain MIT 9211) protein is Imidazole glycerol phosphate synthase subunit HisH.